A 970-amino-acid polypeptide reads, in one-letter code: Phosphoenolpyruvate carboxylase 1 (970 aa).

The residue at position 15 (serine 15) is a Phosphoserine. Residues histidine 177, lysine 606, and arginine 647 contribute to the active site.

The protein belongs to the PEPCase type 1 family. Homotetramer. Requires Mg(2+) as cofactor.

It localises to the cytoplasm. It catalyses the reaction oxaloacetate + phosphate = phosphoenolpyruvate + hydrogencarbonate. It functions in the pathway photosynthesis; C4 acid pathway. With respect to regulation, by light-reversible phosphorylation. Its function is as follows. Through the carboxylation of phosphoenolpyruvate (PEP) it forms oxaloacetate, a four-carbon dicarboxylic acid source for the tricarboxylic acid cycle. The chain is Phosphoenolpyruvate carboxylase 1 (PEP1) from Zea mays (Maize).